The sequence spans 220 residues: Glutathione peroxidase (220 aa).

Sec-64 is a catalytic residue. Position 64 (Sec-64) is a non-standard amino acid, selenocysteine.

It belongs to the glutathione peroxidase family. Post-translationally, during periods of oxidative stress, Sec-64 may react with a superoxide radical, irreversibly lose hydroselenide and be converted to dehydroalanine.

It carries out the reaction 2 glutathione + H2O2 = glutathione disulfide + 2 H2O. Functionally, may protect the virus and component of infected cells from oxidative damage by peroxides whose formation may be stimulated by infection. The protein is Glutathione peroxidase (GPX1) of Homo sapiens (Human).